Here is a 495-residue protein sequence, read N- to C-terminus: Lysine--tRNA ligase (495 aa).

Positions 406 and 413 each coordinate Mg(2+).

The protein belongs to the class-II aminoacyl-tRNA synthetase family. Homodimer. The cofactor is Mg(2+).

The protein resides in the cytoplasm. The catalysed reaction is tRNA(Lys) + L-lysine + ATP = L-lysyl-tRNA(Lys) + AMP + diphosphate. The polypeptide is Lysine--tRNA ligase (Leptospira borgpetersenii serovar Hardjo-bovis (strain JB197)).